Here is a 167-residue protein sequence, read N- to C-terminus: Interferon gamma (167 aa).

The first 23 residues, 1–23 (MNYTSFIFAFQLCIILCSSGYYC), serve as a signal peptide directing secretion. The residue at position 24 (Gln24) is a Pyrrolidone carboxylic acid. 2 N-linked (GlcNAc...) asparagine glycosylation sites follow: Asn39 and Asn107.

It belongs to the type II (or gamma) interferon family. Homodimer. Interacts with IFNGR1 (via extracellular domain); this interaction promotes IFNGR1 dimerization. In terms of tissue distribution, released primarily from activated T lymphocytes.

It is found in the secreted. Functionally, type II interferon produced by immune cells such as T-cells and NK cells that plays crucial roles in antimicrobial, antiviral, and antitumor responses by activating effector immune cells and enhancing antigen presentation. Primarily signals through the JAK-STAT pathway after interaction with its receptor IFNGR1 to affect gene regulation. Upon IFNG binding, IFNGR1 intracellular domain opens out to allow association of downstream signaling components JAK2, JAK1 and STAT1, leading to STAT1 activation, nuclear translocation and transcription of IFNG-regulated genes. Many of the induced genes are transcription factors such as IRF1 that are able to further drive regulation of a next wave of transcription. Plays a role in class I antigen presentation pathway by inducing a replacement of catalytic proteasome subunits with immunoproteasome subunits. In turn, increases the quantity, quality, and repertoire of peptides for class I MHC loading. Increases the efficiency of peptide generation also by inducing the expression of activator PA28 that associates with the proteasome and alters its proteolytic cleavage preference. Up-regulates as well MHC II complexes on the cell surface by promoting expression of several key molecules such as cathepsins B/CTSB, H/CTSH, and L/CTSL. Participates in the regulation of hematopoietic stem cells during development and under homeostatic conditions by affecting their development, quiescence, and differentiation. The polypeptide is Interferon gamma (IFNG) (Felis catus (Cat)).